The chain runs to 440 residues: NADH-quinone oxidoreductase subunit D (440 aa).

Belongs to the complex I 49 kDa subunit family. As to quaternary structure, NDH-1 is composed of 14 different subunits. Subunits NuoB, C, D, E, F, and G constitute the peripheral sector of the complex.

It localises to the cell membrane. It carries out the reaction a quinone + NADH + 5 H(+)(in) = a quinol + NAD(+) + 4 H(+)(out). NDH-1 shuttles electrons from NADH, via FMN and iron-sulfur (Fe-S) centers, to quinones in the respiratory chain. The immediate electron acceptor for the enzyme in this species is believed to be a menaquinone. Couples the redox reaction to proton translocation (for every two electrons transferred, four hydrogen ions are translocated across the cytoplasmic membrane), and thus conserves the redox energy in a proton gradient. The chain is NADH-quinone oxidoreductase subunit D from Acidothermus cellulolyticus (strain ATCC 43068 / DSM 8971 / 11B).